The following is a 245-amino-acid chain: Galectin-3 (245 aa).

Positions 1-30 (MADGFSLNDALAGSGNPNPQGWPGAWGNQP) are disordered. A2 is modified (N-acetylalanine). Residue S6 is modified to Phosphoserine; by CK1. Repeat copies occupy residues 35-43 (YPGASYPGA), 44-52 (YPGQAPPGA), 53-61 (YPGQAPPGA), and 62-70 (YPGPTAPGA). The tract at residues 35 to 99 (YPGASYPGAY…PSAPGAYPAA (65 aa)) is 7 X 9 AA tandem repeats of Y-P-G-X(3)-P-[GS]-A. Residues 47–68 (QAPPGAYPGQAPPGAYPGPTAP) are disordered. Residues 71–78 (YPGPAPGA) form a 5; approximate repeat. The stretch at 79–88 (YPGQPGASGA) is one 6; approximate repeat. Residues 89–99 (YPSAPGAYPAA) form a 7; approximate repeat. In terms of domain architecture, Galectin spans 113–243 (YKLPLAGGVM…DITLTSAAPT (131 aa)). Position 176 to 182 (176 to 182 (WGREERQ)) interacts with a beta-D-galactoside. Phosphoserine is present on S183. The Nuclear export signal signature appears at 221 to 236 (KNLREINQMEISGDIT).

In terms of assembly, probably forms homo- or heterodimers. Interacts with DMBT1. Interacts with CD6 and ALCAM. Forms a complex with the ITGA3, ITGB1 and CSPG4. Interacts with LGALS3BP, LYPD3, ZFTRAF1 and UACA. Interacts with TRIM16; this interaction mediates autophagy of damage endomembranes. Interacts with cargo receptor TMED10; the interaction mediates the translocation from the cytoplasm into the ERGIC (endoplasmic reticulum-Golgi intermediate compartment) and thereby secretion. Interacts with and inhibits by binding NCR3/NKp30.

The protein resides in the cytoplasm. It localises to the nucleus. It is found in the secreted. Its function is as follows. Galactose-specific lectin which binds IgE. May mediate with the alpha-3, beta-1 integrin the stimulation by CSPG4 of endothelial cells migration. Together with DMBT1, required for terminal differentiation of columnar epithelial cells during early embryogenesis. In the nucleus: acts as a pre-mRNA splicing factor. Involved in acute inflammatory responses including neutrophil activation and adhesion, chemoattraction of monocytes macrophages, opsonization of apoptotic neutrophils, and activation of mast cells. Together with TRIM16, coordinates the recognition of membrane damage with mobilization of the core autophagy regulators ATG16L1 and BECN1 in response to damaged endomembranes. When secreted, interacts with NK cell-activating receptor NCR3/NKp30 acting as an inhibitory ligand which antagonizes NK cell attack. The protein is Galectin-3 (LGALS3) of Cricetulus longicaudatus (Long-tailed dwarf hamster).